The primary structure comprises 162 residues: Phosphopantetheine adenylyltransferase (162 aa).

Thr9 contacts substrate. ATP contacts are provided by residues 9–10 (TF) and His17. Substrate-binding residues include Lys41, Leu77, and Arg91. Residues 92–94 (GLR), Glu102, and 127–133 (RQAIASK) each bind ATP.

The protein belongs to the bacterial CoaD family. In terms of assembly, homohexamer. Mg(2+) is required as a cofactor.

It localises to the cytoplasm. The catalysed reaction is (R)-4'-phosphopantetheine + ATP + H(+) = 3'-dephospho-CoA + diphosphate. The protein operates within cofactor biosynthesis; coenzyme A biosynthesis; CoA from (R)-pantothenate: step 4/5. Reversibly transfers an adenylyl group from ATP to 4'-phosphopantetheine, yielding dephospho-CoA (dPCoA) and pyrophosphate. In Cereibacter sphaeroides (strain ATCC 17025 / ATH 2.4.3) (Rhodobacter sphaeroides), this protein is Phosphopantetheine adenylyltransferase.